An 88-amino-acid polypeptide reads, in one-letter code: Small ribosomal subunit protein bS20 (88 aa).

This sequence belongs to the bacterial ribosomal protein bS20 family.

In terms of biological role, binds directly to 16S ribosomal RNA. In Bradyrhizobium diazoefficiens (strain JCM 10833 / BCRC 13528 / IAM 13628 / NBRC 14792 / USDA 110), this protein is Small ribosomal subunit protein bS20.